Reading from the N-terminus, the 397-residue chain is DNA-directed RNA polymerase subunit Rpo1C (397 aa).

Belongs to the RNA polymerase beta' chain family. In terms of assembly, part of the RNA polymerase complex. An artificial construct of the RNAP clamp domain (including part of this protein) contacts transcription elongation factors Spt4 and Spt5.

It is found in the cytoplasm. It carries out the reaction RNA(n) + a ribonucleoside 5'-triphosphate = RNA(n+1) + diphosphate. Its function is as follows. DNA-dependent RNA polymerase (RNAP) catalyzes the transcription of DNA into RNA using the four ribonucleoside triphosphates as substrates. Forms part of the jaw domain. This chain is DNA-directed RNA polymerase subunit Rpo1C, found in Pyrococcus furiosus (strain ATCC 43587 / DSM 3638 / JCM 8422 / Vc1).